Here is a 223-residue protein sequence, read N- to C-terminus: Trichome differentiation protein GL1 (223 aa).

HTH myb-type domains lie at 11 to 63 and 64 to 118; these read NQEY…MNYL and SPNV…SKKL. 2 consecutive DNA-binding regions (H-T-H motif) follow at residues 39–63 and 91–114; these read WNRI…MNYL and WSLI…NTHL.

The protein resides in the nucleus. Functionally, regulates the production of a signal that induces hair (trichome) precursor cells on leaf primordia to differentiate. The polypeptide is Trichome differentiation protein GL1 (GL1) (Arabidopsis lyrata (Lyre-leaved rock-cress)).